The chain runs to 473 residues: Photosystem II CP43 reaction center protein (473 aa).

The propeptide occupies 1–14 (MKTLYSLRRFYPVE). Residue T15 is modified to N-acetylthreonine. At T15 the chain carries Phosphothreonine. A run of 5 helical transmembrane segments spans residues 69–93 (LFEV…PHLA), 134–155 (LLGP…KDRN), 178–200 (KALY…RKIT), 255–275 (KPFA…LSYS), and 291–312 (WFNN…ASQA). A [CaMn4O5] cluster-binding site is contributed by E367. Residues 447 to 471 (RARAAAAGFEKGIDRDFEPVLSMTP) traverse the membrane as a helical segment.

The protein belongs to the PsbB/PsbC family. PsbC subfamily. In terms of assembly, PSII is composed of 1 copy each of membrane proteins PsbA, PsbB, PsbC, PsbD, PsbE, PsbF, PsbH, PsbI, PsbJ, PsbK, PsbL, PsbM, PsbT, PsbX, PsbY, PsbZ, Psb30/Ycf12, at least 3 peripheral proteins of the oxygen-evolving complex and a large number of cofactors. It forms dimeric complexes. It depends on Binds multiple chlorophylls and provides some of the ligands for the Ca-4Mn-5O cluster of the oxygen-evolving complex. It may also provide a ligand for a Cl- that is required for oxygen evolution. PSII binds additional chlorophylls, carotenoids and specific lipids. as a cofactor.

Its subcellular location is the plastid. The protein resides in the chloroplast thylakoid membrane. In terms of biological role, one of the components of the core complex of photosystem II (PSII). It binds chlorophyll and helps catalyze the primary light-induced photochemical processes of PSII. PSII is a light-driven water:plastoquinone oxidoreductase, using light energy to abstract electrons from H(2)O, generating O(2) and a proton gradient subsequently used for ATP formation. In Morus indica (Mulberry), this protein is Photosystem II CP43 reaction center protein.